Consider the following 906-residue polypeptide: Disintegrin and metalloproteinase domain-containing protein 22 (906 aa).

The signal sequence occupies residues 1–25 (MQAAVAVSVPFLLLCVLGTCPPARC). Residues 26–222 (GQAGDASLME…KFILKPRPKR (197 aa)) constitute a propeptide that is removed on maturation. N-linked (GlcNAc...) asparagine glycosylation occurs at Asn-175. Residues 223–736 (SKRQLRRYPR…LSGNGVAGTN (514 aa)) lie on the Extracellular side of the membrane. In terms of domain architecture, Peptidase M12B spans 239 to 438 (KYIELMIVND…GGGACLFNKP (200 aa)). Disulfide bonds link Cys-349-Cys-433, Cys-392-Cys-417, Cys-394-Cys-401, Cys-447-Cys-477, Cys-458-Cys-474, Cys-460-Cys-466, Cys-473-Cys-494, Cys-485-Cys-491, Cys-490-Cys-516, Cys-503-Cys-523, Cys-510-Cys-542, Cys-535-Cys-547, Cys-554-Cys-605, Cys-569-Cys-635, Cys-583-Cys-593, Cys-600-Cys-663, and Cys-657-Cys-668. Positions 444–531 (PPECGNGFIE…QCAPNIHKMD (88 aa)) constitute a Disintegrin domain. A glycan (N-linked (GlcNAc...) asparagine) is linked at Asn-519. An N-linked (GlcNAc...) asparagine glycan is attached at Asn-634. Asn-675 is a glycosylation site (N-linked (GlcNAc...) asparagine). The 38-residue stretch at 675–712 (NFSTCLSSKEGTICSGNGVCSNELKCVCNRHWIGSDCN) folds into the EGF-like domain. 3 disulfide bridges follow: Cys-679-Cys-694, Cys-688-Cys-700, and Cys-702-Cys-711. The helical transmembrane segment at 737–757 (IIIGIIAGTILVLALILGITA) threads the bilayer. Topologically, residues 758-906 (WGYKNYREQR…QSARLWETSI (149 aa)) are cytoplasmic. Positions 785 to 906 (YSDIPPGVST…QSARLWETSI (122 aa)) are disordered. The segment covering 793–810 (STNSASSSKKRSNGLSHS) has biased composition (low complexity). Position 810 is a phosphoserine (Ser-810). A compositionally biased stretch (basic and acidic residues) spans 811–829 (WSERIPDTKHISDICENGR). Ser-834 bears the Phosphoserine mark. The span at 842–853 (NKKKIRGKRFRP) shows a compositional bias: basic residues. Phosphoserine occurs at positions 857, 862, 866, and 870. Residues 862–877 (SPAKSPSSSTGSIASS) are compositionally biased toward low complexity.

Interacts with LGI1. Interacts with DLG4/PSD95. Also binds LGI4. Interacts with KCNA2 and DLG2. Interacts with ADAM11. Interacts (via C-terminus) with YWHAB/14-3-3 beta. Interacts (via C-terminus) with YWHAZ/14-3-3 zeta. In terms of processing, the precursor is cleaved by a furin endopeptidase. As to expression, highly expressed in the brain and in some high-grade but not low-grade gliomas. Detected slightly or not at all in other tissues.

It is found in the cell membrane. The protein localises to the cell projection. The protein resides in the axon. In terms of biological role, probable ligand for integrin in the brain. This is a non catalytic metalloprotease-like protein. Involved in regulation of cell adhesion and spreading and in inhibition of cell proliferation. Neuronal receptor for LGI1. The polypeptide is Disintegrin and metalloproteinase domain-containing protein 22 (ADAM22) (Homo sapiens (Human)).